A 103-amino-acid polypeptide reads, in one-letter code: MAFTPLHDRVLVRRVESEEKTAGGLIIPDSAKEKPAEGLVIAVGAGAKDDDGDRIPMDVKEGDKILFGKWSGTEVTVDGEELLIMKESDILGIITDEAAAKAA.

It belongs to the GroES chaperonin family. Heptamer of 7 subunits arranged in a ring. Interacts with the chaperonin GroEL.

It localises to the cytoplasm. In terms of biological role, together with the chaperonin GroEL, plays an essential role in assisting protein folding. The GroEL-GroES system forms a nano-cage that allows encapsulation of the non-native substrate proteins and provides a physical environment optimized to promote and accelerate protein folding. GroES binds to the apical surface of the GroEL ring, thereby capping the opening of the GroEL channel. This Dinoroseobacter shibae (strain DSM 16493 / NCIMB 14021 / DFL 12) protein is Co-chaperonin GroES.